The chain runs to 413 residues: Imidazolonepropionase (413 aa).

The Fe(3+) site is built by His79 and His81. Zn(2+)-binding residues include His79 and His81. 4-imidazolone-5-propanoate contacts are provided by Arg88, Tyr151, and His184. N-formimidoyl-L-glutamate is bound at residue Tyr151. His248 serves as a coordination point for Fe(3+). His248 serves as a coordination point for Zn(2+). Glu251 contacts 4-imidazolone-5-propanoate. Residue Asp322 participates in Fe(3+) binding. Asp322 lines the Zn(2+) pocket. The N-formimidoyl-L-glutamate site is built by Asn324 and Gly326. Ser327 is a 4-imidazolone-5-propanoate binding site.

This sequence belongs to the metallo-dependent hydrolases superfamily. HutI family. It depends on Zn(2+) as a cofactor. The cofactor is Fe(3+).

Its subcellular location is the cytoplasm. It carries out the reaction 4-imidazolone-5-propanoate + H2O = N-formimidoyl-L-glutamate. The protein operates within amino-acid degradation; L-histidine degradation into L-glutamate; N-formimidoyl-L-glutamate from L-histidine: step 3/3. Catalyzes the hydrolytic cleavage of the carbon-nitrogen bond in imidazolone-5-propanoate to yield N-formimidoyl-L-glutamate. It is the third step in the universal histidine degradation pathway. The sequence is that of Imidazolonepropionase from Fusobacterium nucleatum subsp. nucleatum (strain ATCC 25586 / DSM 15643 / BCRC 10681 / CIP 101130 / JCM 8532 / KCTC 2640 / LMG 13131 / VPI 4355).